The following is a 160-amino-acid chain: Cytochrome b6-f complex subunit 4 (160 aa).

3 helical membrane passes run 36–56 (ILFT…GLAI), 95–115 (LLGI…PFIE), and 131–151 (AVFL…CFPI).

The protein belongs to the cytochrome b family. PetD subfamily. The 4 large subunits of the cytochrome b6-f complex are cytochrome b6, subunit IV (17 kDa polypeptide, PetD), cytochrome f and the Rieske protein, while the 4 small subunits are PetG, PetL, PetM and PetN. The complex functions as a dimer.

The protein localises to the cellular thylakoid membrane. Functionally, component of the cytochrome b6-f complex, which mediates electron transfer between photosystem II (PSII) and photosystem I (PSI), cyclic electron flow around PSI, and state transitions. The sequence is that of Cytochrome b6-f complex subunit 4 from Picosynechococcus sp. (strain ATCC 27264 / PCC 7002 / PR-6) (Agmenellum quadruplicatum).